Here is a 702-residue protein sequence, read N- to C-terminus: Sodium/hydrogen exchanger 6 (702 aa).

The next 12 membrane-spanning stretches (helical) occupy residues 72–92 (SANL…IWLF), 104–124 (GLAM…IHVP), 177–197 (VTFD…FYAG), 212–232 (ILAY…SIMY), 253–273 (CLLF…AIFH), 279–299 (VELY…AIVL), 325–345 (IGIF…TGVV), 373–393 (TFLL…FCGI), 415–435 (FELL…LTLF), 437–457 (FQNH…IFLG), 480–500 (NFQH…ALAI), and 516–536 (LLIV…MLSC).

Belongs to the monovalent cation:proton antiporter 1 (CPA1) transporter (TC 2.A.36) family. As to quaternary structure, homodimer. Interacts with RACK1; regulates the distribution of SLC9A6 between endosomes and the plasma membrane. Post-translationally, ubiquitinated (in vitro). Glycosylated.

It localises to the endosome membrane. It is found in the recycling endosome membrane. Its subcellular location is the early endosome membrane. The protein resides in the late endosome membrane. The protein localises to the cell membrane. The catalysed reaction is Na(+)(in) + H(+)(out) = Na(+)(out) + H(+)(in). It carries out the reaction K(+)(in) + H(+)(out) = K(+)(out) + H(+)(in). Its function is as follows. Endosomal Na(+), K(+)/H(+) antiporter. Mediates the electroneutral exchange of endosomal luminal H(+) for a cytosolic Na(+) or K(+). By facilitating proton efflux, SLC9A6 counteracts the acidity generated by vacuolar (V)-ATPase, thereby limiting luminal acidification. Responsible for alkalizing and maintaining the endosomal pH, and consequently in, e.g., endosome maturation and trafficking of recycling endosomal cargo. Plays a critical role during neurodevelopment by regulating synaptic development and plasticity. Implicated in the maintenance of cell polarity in a manner that is dependent on its ability to modulate intravesicular pH. Regulates intracelular pH in some specialized cells, osteoclasts and stereocilia where this transporter localizes to the plasma membrane. In Mus musculus (Mouse), this protein is Sodium/hydrogen exchanger 6 (Slc9a6).